Reading from the N-terminus, the 177-residue chain is FMRFamide-related peptides (177 aa).

The signal sequence occupies residues 1–21 (MNHPRSIAMLAALWLVVSVTS). Residues 22 to 32 (TPVRRSPDLEA) constitute a propeptide that is removed on maturation. Phenylalanine amide is present on F45. Positions 47 to 93 (RSTLPVVPPAQPSFLQRYSAPQPAALTADDLMTFLRAYEEDYSSPVS) are excised as a propeptide. Residues F102 and F111 each carry the phenylalanine amide modification. The propeptide occupies 113-131 (RSVDEENSGYQAETNTYPQ). L143 is modified (leucine amide). The propeptide occupies 145-177 (RDNELSESNDEDRYEVESERTKRSVVDPCNDCA). Positions 145–177 (RDNELSESNDEDRYEVESERTKRSVVDPCNDCA) are disordered. The span at 149-158 (LSESNDEDRY) shows a compositional bias: acidic residues. Positions 159–169 (EVESERTKRSV) are enriched in basic and acidic residues.

The protein belongs to the FARP (FMRFamide related peptide) family. Only expressed in the CNS and predominantly in the thoracic ganglia. Strongest expression is seen in two pairs of large neurons in each thoracic ganglion. These neurons are ventrolateral neurosecretory cells 1 and 2, they project their axons through transverse nerves into the periphery where axons from the prothoracic ganglion innervate the prothoracic gland.

It is found in the secreted. Regulates ecdysteroidogenesis by direct innervation of the prothoracic gland by reducing cAMP production via the receptor for myosuppressin. The neurons that innervate the prothoracic gland during the fifth instar are most active during days 0-4, after which they reduce and then peak again on day 6. Expression suppresses the biosynthesis of steroid hormones called ecdysteroids that elicit molting and metamorphosis. This is FMRFamide-related peptides from Bombyx mori (Silk moth).